A 574-amino-acid chain; its full sequence is Septation ring formation regulator EzrA (574 aa).

Topologically, residues 1-7 are extracellular; that stretch reads MSSGIIL. Residues 8-26 traverse the membrane as a helical segment; it reads LIVAIVLLVIIAYLVGVII. At 27 to 574 the chain is on the cytoplasmic side; sequence RKRNDSLITS…YEKTREHIRF (548 aa). 3 coiled-coil regions span residues 102–141, 274–350, and 459–520; these read NFIR…EEKN, ELVT…ETES, and QLEA…SFEA.

Belongs to the EzrA family.

Its subcellular location is the cell membrane. Negative regulator of FtsZ ring formation; modulates the frequency and position of FtsZ ring formation. Inhibits FtsZ ring formation at polar sites. Interacts either with FtsZ or with one of its binding partners to promote depolymerization. This chain is Septation ring formation regulator EzrA, found in Streptococcus pyogenes serotype M4 (strain MGAS10750).